A 90-amino-acid polypeptide reads, in one-letter code: MVKNSFISAISQEEKEKNKGSTEFQILNFTKRIRRLTSHLELHKKDYLSQRGLRKILGKRQRLLTYLSNKNRVRYKELIGQLDIREPKTR.

This sequence belongs to the universal ribosomal protein uS15 family. As to quaternary structure, part of the 30S ribosomal subunit.

The protein localises to the plastid. It is found in the chloroplast. The sequence is that of Small ribosomal subunit protein uS15c (rps15) from Piper cenocladum (Ant piper).